The sequence spans 122 residues: Large ribosomal subunit protein uL14c (122 aa).

It belongs to the universal ribosomal protein uL14 family. In terms of assembly, part of the 50S ribosomal subunit.

It localises to the plastid. Its subcellular location is the chloroplast. Binds to 23S rRNA. The chain is Large ribosomal subunit protein uL14c from Anthoceros angustus (Hornwort).